Reading from the N-terminus, the 182-residue chain is Putative manganese efflux pump MntP (182 aa).

A run of 6 helical transmembrane segments spans residues 7 to 27, 38 to 58, 71 to 91, 106 to 126, 131 to 151, and 159 to 179; these read IISI…VSLG, IAYI…AGML, TSFA…FSAF, LWII…GLGI, IFVT…LGML, and FLGV…GIFI.

This sequence belongs to the MntP (TC 9.B.29) family.

It is found in the cell membrane. In terms of biological role, probably functions as a manganese efflux pump. The polypeptide is Putative manganese efflux pump MntP (Oceanobacillus iheyensis (strain DSM 14371 / CIP 107618 / JCM 11309 / KCTC 3954 / HTE831)).